A 362-amino-acid polypeptide reads, in one-letter code: Patr class I histocompatibility antigen, A-5 alpha chain (362 aa).

The signal sequence occupies residues 1-24; sequence MQVTAPRTVLLLLSAALALTETWA. The interval 25 to 114 is alpha-1; it reads GSHSMKYFYT…LRGYYNQSEA (90 aa). Residues 25–308 are Extracellular-facing; that stretch reads GSHSMKYFYT…EPSSQSTIPI (284 aa). A glycan (N-linked (GlcNAc...) asparagine) is linked at Asn-110. Residues 115-206 form an alpha-2 region; sequence GSHIIQRMYG…ENGKETLQRA (92 aa). 2 disulfides stabilise this stretch: Cys-125–Cys-188 and Cys-227–Cys-283. An alpha-3 region spans residues 207 to 298; sequence DPPKTHVTHH…GLPKPLTLRW (92 aa). Residues 209–295 enclose the Ig-like C1-type domain; the sequence is PKTHVTHHPI…QHEGLPKPLT (87 aa). Residues 299-308 form a connecting peptide region; that stretch reads EPSSQSTIPI. Residues 309 to 332 traverse the membrane as a helical segment; sequence VGIVAGLAVLAVVVIGAVVAAVMC. The Cytoplasmic portion of the chain corresponds to 333 to 362; sequence RRKSSGGKGGSYSQAASSDSAQGSDVSLTA. The interval 336–362 is disordered; the sequence is SSGGKGGSYSQAASSDSAQGSDVSLTA. Ser-343 is subject to Phosphoserine. Positions 343–362 are enriched in low complexity; it reads SYSQAASSDSAQGSDVSLTA. Tyr-344 is modified (phosphotyrosine). A phosphoserine mark is found at Ser-345, Ser-349, Ser-350, Ser-352, Ser-356, and Ser-359.

The protein belongs to the MHC class I family. As to quaternary structure, heterodimer of an alpha chain and a beta chain (beta-2-microglobulin).

It localises to the membrane. Involved in the presentation of foreign antigens to the immune system. This chain is Patr class I histocompatibility antigen, A-5 alpha chain, found in Pan troglodytes (Chimpanzee).